Here is a 217-residue protein sequence, read N- to C-terminus: MNQSLLTQFGDPFERVERALRSLRNGNGVLVTDDENRENEGDLIFPAQTLNEVQMAMLIRECSGIVCLCLTDEKVRSLGLPMMVENNSSRFKTAFTVTIEAAHGVTTGVSAADRVKTVKTAVAENAKPEDLNRPGHVFPLRACPGGVLERQGHTEATVDLMKLAGLQPYGVLCELTNIDGTMARLPEVVTFANKNNIPVVTIDDLIMYRKQHQKKVS.

Residues 37-38, D42, 150-154, and E174 each bind D-ribulose 5-phosphate; these read RE and RQGHT. E38 is a Mg(2+) binding site. Position 153 (H153) interacts with Mg(2+).

The protein belongs to the DHBP synthase family. In terms of assembly, homodimer. Requires Mg(2+) as cofactor. Mn(2+) serves as cofactor.

It carries out the reaction D-ribulose 5-phosphate = (2S)-2-hydroxy-3-oxobutyl phosphate + formate + H(+). The protein operates within cofactor biosynthesis; riboflavin biosynthesis; 2-hydroxy-3-oxobutyl phosphate from D-ribulose 5-phosphate: step 1/1. Its function is as follows. Catalyzes the conversion of D-ribulose 5-phosphate to formate and 3,4-dihydroxy-2-butanone 4-phosphate. The polypeptide is 3,4-dihydroxy-2-butanone 4-phosphate synthase (Desulforamulus reducens (strain ATCC BAA-1160 / DSM 100696 / MI-1) (Desulfotomaculum reducens)).